An 810-amino-acid chain; its full sequence is Protein 4.1 (810 aa).

A disordered region spans residues 1 to 124 (MTTEKSLVAE…KEIEFGTSLD (124 aa)). Position 14 is a phosphoserine (serine 14). Threonine 61 is subject to Phosphothreonine. The segment covering 62–76 (PTHEDLTKNKERTSE) has biased composition (basic and acidic residues). Phosphoserine is present on residues serine 85, serine 86, serine 96, serine 105, serine 122, serine 150, serine 152, serine 153, serine 189, and serine 192. The segment covering 102 to 118 (DVESAKEKCEGGQKEIE) has biased composition (basic and acidic residues). The interval 152-203 (SSAETQPAQEEHREDPDFETKEGGGLEECSKIEVKEESPESKAERELKASQK) is disordered. Over residues 160–200 (QEEHREDPDFETKEGGGLEECSKIEVKEESPESKAERELKA) the composition is skewed to basic and acidic residues. The FERM domain occupies 211-492 (MHCKVSLLDD…EHHTFFRLTS (282 aa)). Residue tyrosine 223 is modified to Phosphotyrosine. Position 379 is a phosphothreonine (threonine 379). The interval 518 to 613 (TRQASALIDR…DQAEPEPTEV (96 aa)) is disordered. Residues serine 522, serine 541, serine 543, and serine 555 each carry the phosphoserine modification. Residues 587 to 601 (AQKETVKDEEKKEEG) show a composition bias toward basic and acidic residues. The spectrin--actin-binding stretch occupies residues 615 to 659 (KDLDKSQEEIKKHHASISELKKNFMESVPEPRPSEWDKRLSTHSP). Serine 620, serine 630, serine 655, and serine 658 each carry phosphoserine. The tract at residues 660–810 (FRTLNINGQL…VHQETEISEE (151 aa)) is C-terminal (CTD). Residues threonine 682 and threonine 805 each carry the phosphothreonine modification.

Binds with a high affinity to glycophorin and with lower affinity to band III protein. Associates with the nuclear mitotic apparatus. Binds calmodulin, CPAP and DLG1. Also found to associate with contractile apparatus and tight junctions. Interacts with NUMA1; this interaction is negatively regulated by CDK1 during metaphase and promotes for anaphase-specific localization of NUMA1 in symmetrically dividing cells. Interacts with ATP2B1; regulates small intestinal calcium absorption through regulation of membrane expression of ATP2B1. In terms of processing, O-glycosylated; contains N-acetylglucosamine side chains in the C-terminal domain. Phosphorylated at multiple sites by different protein kinases and each phosphorylation event selectively modulates the protein's functions.

It localises to the nucleus. It is found in the cytoplasm. The protein resides in the cytoskeleton. Its subcellular location is the cell cortex. Protein 4.1 is a major structural element of the erythrocyte membrane skeleton. It plays a key role in regulating membrane physical properties of mechanical stability and deformability by stabilizing spectrin-actin interaction. Recruits DLG1 to membranes. Required for dynein-dynactin complex and NUMA1 recruitment at the mitotic cell cortex during anaphase. The sequence is that of Protein 4.1 from Canis lupus familiaris (Dog).